The sequence spans 305 residues: Ribonuclease BN (305 aa).

The Zn(2+) site is built by H64, H66, D68, H69, H141, D212, and H270. The Proton acceptor role is filled by D68.

This sequence belongs to the RNase Z family. RNase BN subfamily. Homodimer. Zn(2+) serves as cofactor.

Zinc phosphodiesterase, which has both exoribonuclease and endoribonuclease activities. This chain is Ribonuclease BN, found in Escherichia coli O7:K1 (strain IAI39 / ExPEC).